Here is an 81-residue protein sequence, read N- to C-terminus: Small ribosomal subunit protein bS16 (81 aa).

The protein belongs to the bacterial ribosomal protein bS16 family.

The polypeptide is Small ribosomal subunit protein bS16 (Clostridium perfringens (strain ATCC 13124 / DSM 756 / JCM 1290 / NCIMB 6125 / NCTC 8237 / Type A)).